The primary structure comprises 30 residues: Chassatide C3 (30 aa).

Positions G1–N30 form a cross-link, cyclopeptide (Gly-Asn). 3 disulfide bridges follow: C4/C20, C8/C22, and C13/C27.

In terms of processing, this is a cyclic peptide. As to expression, expressed in fruit, pedicel, stem and root but not in leaf (at protein level).

Its function is as follows. Probably participates in a plant defense mechanism. This chain is Chassatide C3, found in Chassalia chartacea (Chassalia curviflora).